A 249-amino-acid chain; its full sequence is Tryptophan synthase alpha chain (249 aa).

Catalysis depends on proton acceptor residues glutamate 43 and aspartate 54.

This sequence belongs to the TrpA family. Tetramer of two alpha and two beta chains.

The catalysed reaction is (1S,2R)-1-C-(indol-3-yl)glycerol 3-phosphate + L-serine = D-glyceraldehyde 3-phosphate + L-tryptophan + H2O. The protein operates within amino-acid biosynthesis; L-tryptophan biosynthesis; L-tryptophan from chorismate: step 5/5. Functionally, the alpha subunit is responsible for the aldol cleavage of indoleglycerol phosphate to indole and glyceraldehyde 3-phosphate. This chain is Tryptophan synthase alpha chain, found in Campylobacter jejuni subsp. jejuni serotype O:6 (strain 81116 / NCTC 11828).